A 276-amino-acid polypeptide reads, in one-letter code: Bis(5'-nucleosyl)-tetraphosphatase, symmetrical (276 aa).

This sequence belongs to the Ap4A hydrolase family.

The enzyme catalyses P(1),P(4)-bis(5'-adenosyl) tetraphosphate + H2O = 2 ADP + 2 H(+). In terms of biological role, hydrolyzes diadenosine 5',5'''-P1,P4-tetraphosphate to yield ADP. The chain is Bis(5'-nucleosyl)-tetraphosphatase, symmetrical from Tolumonas auensis (strain DSM 9187 / NBRC 110442 / TA 4).